The sequence spans 365 residues: Chorismate synthase (365 aa).

The interval 41–60 (MQHDLDRRRPGTSRYTTARR) is disordered. Positions 48 and 54 each coordinate NADP(+). FMN-binding positions include 125–127 (RSS), 238–239 (NA), Gly278, 293–297 (KPTSS), and Arg319.

Belongs to the chorismate synthase family. Homotetramer. The cofactor is FMNH2.

The catalysed reaction is 5-O-(1-carboxyvinyl)-3-phosphoshikimate = chorismate + phosphate. The protein operates within metabolic intermediate biosynthesis; chorismate biosynthesis; chorismate from D-erythrose 4-phosphate and phosphoenolpyruvate: step 7/7. Catalyzes the anti-1,4-elimination of the C-3 phosphate and the C-6 proR hydrogen from 5-enolpyruvylshikimate-3-phosphate (EPSP) to yield chorismate, which is the branch point compound that serves as the starting substrate for the three terminal pathways of aromatic amino acid biosynthesis. This reaction introduces a second double bond into the aromatic ring system. This is Chorismate synthase from Shewanella amazonensis (strain ATCC BAA-1098 / SB2B).